The primary structure comprises 176 residues: Transcription factor E (176 aa).

In terms of domain architecture, HTH TFE/IIEalpha-type spans 5 to 89 (IDQLMKDMAR…YWKANVDQIN (85 aa)).

The protein belongs to the TFE family. As to quaternary structure, monomer. Interaction with RNA polymerase subunits RpoF and RpoE is necessary for Tfe stimulatory transcription activity. Able to interact with Tbp and RNA polymerase in the absence of DNA promoter. Interacts both with the preinitiation and elongation complexes.

Functionally, transcription factor that plays a role in the activation of archaeal genes transcribed by RNA polymerase. Facilitates transcription initiation by enhancing TATA-box recognition by TATA-box-binding protein (Tbp), and transcription factor B (Tfb) and RNA polymerase recruitment. Not absolutely required for transcription in vitro, but particularly important in cases where Tbp or Tfb function is not optimal. It dynamically alters the nucleic acid-binding properties of RNA polymerases by stabilizing the initiation complex and destabilizing elongation complexes. Seems to translocate with the RNA polymerase following initiation and acts by binding to the non template strand of the transcription bubble in elongation complexes. In Metallosphaera sedula (strain ATCC 51363 / DSM 5348 / JCM 9185 / NBRC 15509 / TH2), this protein is Transcription factor E.